We begin with the raw amino-acid sequence, 103 residues long: Large ribosomal subunit protein bL21 (103 aa).

Belongs to the bacterial ribosomal protein bL21 family. In terms of assembly, part of the 50S ribosomal subunit. Contacts protein L20.

In terms of biological role, this protein binds to 23S rRNA in the presence of protein L20. The polypeptide is Large ribosomal subunit protein bL21 (Mycobacteroides abscessus (strain ATCC 19977 / DSM 44196 / CCUG 20993 / CIP 104536 / JCM 13569 / NCTC 13031 / TMC 1543 / L948) (Mycobacterium abscessus)).